The following is a 912-amino-acid chain: E3 ubiquitin-protein ligase HACE1 (912 aa).

ANK repeat units lie at residues 23-55, 64-93, 97-126, 130-159, 163-192, 196-226, and 228-253; these read LPEDNETAVYTLMPMVMADQHRSVLELLSNSKF, VKRSLLHIAANCGSVECLVLLLKRGADPNY, SGCTPLHLAARNGQKKCMSKLLEYNADVNI, EGLTAIHWLAVNGRTELLHDLVQHVTNVDV, MGQTALHVACQNGHKTTVLCLLDSGADINR, SGATPLYFACSHGQRDTAQILLLRGAKYLPD, and NGVTPLDLCVQGGYGETCDILIQHHP. The region spanning 577 to 912 is the HECT domain; that stretch reads NCEKLKQGIA…HCGSYGYTMA (336 aa). Residue C879 is the Glycyl thioester intermediate of the active site.

The protein localises to the golgi apparatus. It localises to the golgi stack membrane. It is found in the cytoplasm. The protein resides in the endoplasmic reticulum. The catalysed reaction is S-ubiquitinyl-[E2 ubiquitin-conjugating enzyme]-L-cysteine + [acceptor protein]-L-lysine = [E2 ubiquitin-conjugating enzyme]-L-cysteine + N(6)-ubiquitinyl-[acceptor protein]-L-lysine.. It functions in the pathway protein modification; protein ubiquitination. Its function is as follows. E3 ubiquitin-protein ligase involved in Golgi membrane fusion and regulation of small GTPases. Acts as a regulator of Golgi membrane dynamics during the cell cycle: recruited to Golgi membrane by Rab proteins and regulates postmitotic Golgi membrane fusion. Acts by mediating ubiquitination during mitotic Golgi disassembly, ubiquitination serving as a signal for Golgi reassembly later, after cell division. In Xenopus tropicalis (Western clawed frog), this protein is E3 ubiquitin-protein ligase HACE1 (hace1).